The chain runs to 152 residues: MAGSLNKVILIGNVGRDPEIRTTGEGKKIINLSLATTETWKDRITSERKERTEWHRVVIFSEGLVSIVERYVTKGSKLYIEGSLQTRKWNDNSGQEKYTTEVVLQNFNSQLILLDHKNSNQNTQGSGHHEYKYPETKNHSFDHSDLDDEIPF.

The region spanning 5-111 (LNKVILIGNV…VVLQNFNSQL (107 aa)) is the SSB domain. A DNA-binding region spans residues 54-60 (WHRVVIF). The disordered stretch occupies residues 118–152 (NSNQNTQGSGHHEYKYPETKNHSFDHSDLDDEIPF). Over residues 127-144 (GHHEYKYPETKNHSFDHS) the composition is skewed to basic and acidic residues. Residues 147 to 152 (DDEIPF) carry the Important for interaction with partner proteins motif.

In terms of assembly, homotetramer.

Functionally, plays an important role in DNA replication, recombination and repair. Binds to ssDNA and to an array of partner proteins to recruit them to their sites of action during DNA metabolism. The polypeptide is Single-stranded DNA-binding protein (ssb) (Rickettsia prowazekii (strain Madrid E)).